The chain runs to 331 residues: Small ribosomal subunit protein uS2 (331 aa).

It belongs to the universal ribosomal protein uS2 family.

The chain is Small ribosomal subunit protein uS2 from Rhodopseudomonas palustris (strain BisB5).